We begin with the raw amino-acid sequence, 120 residues long: Chemokine vCXCL1 (120 aa).

This sequence belongs to the intercrine alpha (chemokine CxC) family. As to quaternary structure, interacts with host CXCR1 and CXCR2.

Functionally, acts as a functional chemokine, inducing calcium mobilization, chemotaxis, and degranulation of neutrophils. Contributes to the induction of neutrophil chemotaxis by interacting with host CXCR1 and CXCR2 receptors. In Human cytomegalovirus (strain Merlin) (HHV-5), this protein is Chemokine vCXCL1 (UL146).